Here is a 605-residue protein sequence, read N- to C-terminus: Probable potassium transport system protein Kup 3 (605 aa).

12 helical membrane-spanning segments follow: residues 16–36 (ALGL…TVIF), 49–69 (ILSL…AWLA), 97–117 (VAFA…DAVI), 138–158 (GLST…LFSV), 170–190 (FGPI…VSAF), 212–232 (GLAG…GEAL), 247–267 (AWHF…VFAI), 287–307 (LYIP…QAII), 339–359 (IYLG…MLVF), 368–388 (AYGM…IIVF), 397–417 (ALVA…TFSK), and 418–438 (LPHG…TIII).

This sequence belongs to the HAK/KUP transporter (TC 2.A.72) family.

The protein resides in the cell inner membrane. It catalyses the reaction K(+)(in) + H(+)(in) = K(+)(out) + H(+)(out). Transport of potassium into the cell. Likely operates as a K(+):H(+) symporter. In Geobacter sulfurreducens (strain ATCC 51573 / DSM 12127 / PCA), this protein is Probable potassium transport system protein Kup 3.